Consider the following 145-residue polypeptide: MKKSARRQSRELATQGLYQWLLSNASSGEIDAQLRGALGYDKADKELLEAILHGVIREHATLVEALTPSLDRPIEQLSPVERAVLLIATFELTHHVETPYRVIINEAVELAKTFGGSDGYKYVNGVLDKLAAKLRPAETQARRNG.

This sequence belongs to the NusB family.

Functionally, involved in transcription antitermination. Required for transcription of ribosomal RNA (rRNA) genes. Binds specifically to the boxA antiterminator sequence of the ribosomal RNA (rrn) operons. This chain is Transcription antitermination protein NusB, found in Burkholderia lata (strain ATCC 17760 / DSM 23089 / LMG 22485 / NCIMB 9086 / R18194 / 383).